The following is a 327-amino-acid chain: MGTDYRNSGRGGRDGPGGRGPGNDRRDSGRSFGDRRPERPDFKRGDGGRGFGDRRGSGPPGGPDRGDRRGPRDGPGGRGGPGGPGGGFKGGAKTMVKPHPKYDGIFISHGRGDVLVTKSLAPGVAVYGEKRISVEGTESKIEYREWNPFRSKLGAAVRLNVLDMPIKPGAKVLYLGAASGTTVSHVSDIVGPTGAVYAVEFSQRSGRDLLEVAKARTNVYPIIADARHPYKYRMIVPEVDCIFSDVAQPDQARIVAENARYYLKANGGMLISIKASSVDSTLKPEAVFAREIETLREHDFKCKEQLDIGEFHRNHAIVVGRFRVKAA.

Residues 1-96 (MGTDYRNSGR…GFKGGAKTMV (96 aa)) form a disordered region. Asymmetric dimethylarginine is present on residues Arg10, Arg19, Arg44, Arg49, Arg55, Arg65, Arg69, and Arg78. Residues 22–56 (GNDRRDSGRSFGDRRPERPDFKRGDGGRGFGDRRG) show a composition bias toward basic and acidic residues. A compositionally biased stretch (gly residues) spans 73–90 (DGPGGRGGPGGPGGGFKG). S-adenosyl-L-methionine is bound by residues 181–182 (TT), 200–201 (EF), 225–226 (DA), and 245–248 (DVAQ).

This sequence belongs to the methyltransferase superfamily. Fibrillarin family. Component of box C/D small nucleolar ribonucleoprotein (snoRNP) particles. It is associated with the U3, U8 and U13 small nuclear RNAs. In terms of processing, by homology to other fibrillarins, some or all of the N-terminal domain arginines are modified to asymmetric dimethylarginine (DMA).

Its subcellular location is the nucleus. It is found in the nucleolus. It carries out the reaction L-glutaminyl-[histone H2A] + S-adenosyl-L-methionine = N(5)-methyl-L-glutaminyl-[histone H2A] + S-adenosyl-L-homocysteine + H(+). S-adenosyl-L-methionine-dependent methyltransferase that has the ability to methylate both RNAs and proteins. Involved in pre-rRNA processing. Utilizes the methyl donor S-adenosyl-L-methionine to catalyze the site-specific 2'-hydroxyl methylation of ribose moieties in pre-ribosomal RNA. Site specificity is provided by a guide RNA that base pairs with the substrate. Methylation occurs at a characteristic distance from the sequence involved in base pairing with the guide RNA. Also acts as a protein methyltransferase by mediating methylation of 'Gln-105' of histone H2A (H2AQ105me), a modification that impairs binding of the FACT complex and is specifically present at 35S ribosomal DNA locus. This Giardia intestinalis (Giardia lamblia) protein is rRNA 2'-O-methyltransferase fibrillarin.